We begin with the raw amino-acid sequence, 230 residues long: MPHHIVIVEDEPVTQARLQSYFTQEGYTVSVTASGAGLREIMQNQSVDLILLDINLPDENGLMLTRALRERSTVGIILVTGRSDRIDRIVGLEMGADDYVTKPLELRELVVRVKNLLWRIDLARQAQPHTQDNCYRFAGYCLNVSRHTLERDGEPIKLTRAEYEMLVAFVTNPGEILSRERLLRMLSARRVENPDLRTVDVLIRRLRHKLSADLLVTQHGEGYFLAADVC.

The Response regulatory domain occupies 4–117 (HIVIVEDEPV…ELVVRVKNLL (114 aa)). The residue at position 53 (D53) is a 4-aspartylphosphate. The segment at residues 132–227 (DNCYRFAGYC…QHGEGYFLAA (96 aa)) is a DNA-binding region (ompR/PhoB-type).

Interacts with TorI. TorI binds to the effector domain of TorR. This interaction, which does not interfere with TorR DNA binding activity, probably prevents the recruitment of RNA polymerase to the torCAD promoter. In terms of processing, phosphorylated and dephosphorylated by TorS.

It is found in the cytoplasm. Functionally, member of the two-component regulatory system TorS/TorR involved in the anaerobic utilization of trimethylamine-N-oxide (TMAO). Phosphorylated TorR activates the transcription of the torCAD operon by binding to four decameric boxes located in the torCAD promoter. Box1, 2 and 4 contain the DNA sequence 5'-CTGTTCATAT-3' and box3 contains the DNA sequence 5'-CCGTTCATCC-3'. Phosphorylated as well as unphosphorylated TorR negatively regulates its own expression by binding to box1 and 2. This Escherichia coli (strain K12) protein is TorCAD operon transcriptional regulatory protein TorR (torR).